We begin with the raw amino-acid sequence, 264 residues long: Signal peptidase I (264 aa).

The Cytoplasmic portion of the chain corresponds to 1 to 18 (MNRDNTKTNKTVKQEFAS). Residues 19 to 39 (FTFVICIALVIRILIMEPFTV) form a helical membrane-spanning segment. At 40–264 (PTGSMKATIL…IFKNLYNVDE (225 aa)) the chain is on the periplasmic side. Active-site residues include Ser-43 and Lys-106.

It belongs to the peptidase S26 family.

The protein resides in the cell inner membrane. It carries out the reaction Cleavage of hydrophobic, N-terminal signal or leader sequences from secreted and periplasmic proteins.. In terms of biological role, complements E.coli mutants temperature-sensitive for LepB function. The chain is Signal peptidase I (lepB) from Rickettsia typhi (strain ATCC VR-144 / Wilmington).